We begin with the raw amino-acid sequence, 263 residues long: HTH-type transcriptional repressor NanR (263 aa).

The segment at 1–21 (MGLMNAFDSQTEDSSPVIGRN) is disordered. The HTH gntR-type domain maps to 30-98 (KKLSEMVEEE…NGERARVSRP (69 aa)). The H-T-H motif DNA-binding region spans 58–77 (ERELMAFFNVGRPSVREALA).

Belongs to the NanR family.

Transcriptional repressor that controls expression of the genes required for the catabolism of sialic acids. In Escherichia coli O7:K1 (strain IAI39 / ExPEC), this protein is HTH-type transcriptional repressor NanR.